Consider the following 165-residue polypeptide: MVGRDENELQDVQLLGSQGTTYDFNYTPEVLEVFDNKHVSRDYFVKFNCPEFTTLCPKTNQPDFGTIYISYIPDIKMVESKSLKLYLFSFRNHGDFHEDCINIIMNDLIDLMNPRYIEVRGKFTPRGGISIDPYCNYGRPGTKFEQMADQRLIQHDMYPEKIDNR.

Cys-56 functions as the Thioimide intermediate in the catalytic mechanism. Asp-63 acts as the Proton donor in catalysis. Substrate is bound by residues 78-80 (VES) and 97-98 (HE).

The protein belongs to the GTP cyclohydrolase I family. QueF type 1 subfamily.

It localises to the cytoplasm. It catalyses the reaction 7-aminomethyl-7-carbaguanine + 2 NADP(+) = 7-cyano-7-deazaguanine + 2 NADPH + 3 H(+). The protein operates within tRNA modification; tRNA-queuosine biosynthesis. Functionally, catalyzes the NADPH-dependent reduction of 7-cyano-7-deazaguanine (preQ0) to 7-aminomethyl-7-deazaguanine (preQ1). This is NADPH-dependent 7-cyano-7-deazaguanine reductase from Oceanobacillus iheyensis (strain DSM 14371 / CIP 107618 / JCM 11309 / KCTC 3954 / HTE831).